A 369-amino-acid chain; its full sequence is Endo-1,4-beta-xylanase A (369 aa).

Residues 1–20 form the signal peptide; sequence MRKLTQFCLGLMLLPIAAVA. The GH10 domain maps to 21-367; sequence QNQPTMKDVL…KPVVKEIIKL (347 aa). The Proton donor role is filled by Glu-156. The Nucleophile role is filled by Glu-261.

Belongs to the glycosyl hydrolase 10 (cellulase F) family.

The enzyme catalyses Endohydrolysis of (1-&gt;4)-beta-D-xylosidic linkages in xylans.. It participates in glycan degradation; xylan degradation. The polypeptide is Endo-1,4-beta-xylanase A (xynA) (Xylanibacter ruminicola (Prevotella ruminicola)).